We begin with the raw amino-acid sequence, 317 residues long: MQSPDGQETGRPAAILIAGPTASGKSALGLRIARAFGGTVINTDSMQVYADLRVLSARPTAEEEGLAPHRLYGSIDGAVNFSVGHFQRQAAALLSEMDAGSLPVFVGGTGLYFRSLDEGISDLPEVPDAVRQRIRIEADGQPTETLHAALALRDPESAERLRPSDRMRVMRALEIHAATGRSIGSFHEARVPGPLAGKPLLKLFLATEREALRQRIDARFVTMMEQGALDEVAALRERRLDPLLPVMRAHGVPGLIAHLDGTISRQEAIQRGQGDTRRYAKRQFTWFRHQMGEAWHWTTPEAAWSLVQARLSAPAGR.

ATP is bound at residue 19 to 26 (GPTASGKS). Residue 21 to 26 (TASGKS) coordinates substrate. The interval 44-47 (DSMQ) is interaction with substrate tRNA.

The protein belongs to the IPP transferase family. In terms of assembly, monomer. Mg(2+) is required as a cofactor.

It carries out the reaction adenosine(37) in tRNA + dimethylallyl diphosphate = N(6)-dimethylallyladenosine(37) in tRNA + diphosphate. Its function is as follows. Catalyzes the transfer of a dimethylallyl group onto the adenine at position 37 in tRNAs that read codons beginning with uridine, leading to the formation of N6-(dimethylallyl)adenosine (i(6)A). The protein is tRNA dimethylallyltransferase of Methylorubrum extorquens (strain PA1) (Methylobacterium extorquens).